We begin with the raw amino-acid sequence, 1842 residues long: Fatty acid synthase alpha subunit pigJ (1842 aa).

The segment at 120–184 is disordered; that stretch reads GAPVEEEGSK…TPAGGSTTPD (65 aa). Residues 140 to 175 are compositionally biased toward low complexity; that stretch reads SGSSRTATTAKATVTTPSSSSPETAPPAASTPSQGT. One can recognise a Carrier domain in the interval 184–262; it reads DIPLSAKHVV…DALQGNFPGK (79 aa). S222 is subject to O-(pantetheine 4'-phosphoryl)serine. The interval 611 to 807 is beta-ketoacyl reductase; sequence GKTVLVTGAG…CGAAIGWVRG (197 aa). Residues 1058–1585 enclose the Ketosynthase family 3 (KS3) domain; the sequence is KEFLQEIVVE…QKGGIAVVVA (528 aa). Catalysis depends on for beta-ketoacyl synthase activity residues C1244, H1470, and H1511. Positions 1649 to 1672 are disordered; it reads KARVGGHPENNNNNNNNSSSKRNT. Over residues 1658–1668 the composition is skewed to low complexity; the sequence is NNNNNNNNSSS. Residues D1725, V1726, and E1727 each coordinate Mg(2+). Acetyl-CoA is bound by residues 1725–1727, S1761, 1770–1780, and 1823–1825; these read DVE, EAVFKSLQTPS, and ITH. T1824 and H1825 together coordinate Mg(2+).

It belongs to the thiolase-like superfamily. Fungal fatty acid synthetase subunit alpha family. As to quaternary structure, [Alpha(6)beta(6)] hexamers of two multifunctional subunits (alpha and beta).

It carries out the reaction acetyl-CoA + n malonyl-CoA + 2n NADPH + 4n H(+) = a long-chain-acyl-CoA + n CoA + n CO2 + 2n NADP(+).. The enzyme catalyses a fatty acyl-[ACP] + malonyl-[ACP] + H(+) = a 3-oxoacyl-[ACP] + holo-[ACP] + CO2. The catalysed reaction is a (3R)-hydroxyacyl-[ACP] + NADP(+) = a 3-oxoacyl-[ACP] + NADPH + H(+). Its pathway is secondary metabolite biosynthesis. Its function is as follows. Fatty acid synthase alpha subunit; part of the gene cluster that mediates the biosynthesis of azaphilone pigments (MonAzPs), a complex mixture of compounds with a common azaphilone skeleton very widely used as food colorants. PigJ and pigK form the two subunits of a dedicated fungal fatty acid synthase (FAS) that produces the side chain fatty acyl moiety of MonAzPs, a beta-keto fatty acid. The chain length control of the pigJ-pigK FAS is somewhat flexible as MonAzPs features either a beta-ketooctanoic or a beta-ketodecanoic acid moiety. The beta-ketoacyl-ACP probably serves as the substrate for the acetyltransferase pigD that directly transfers the fatty acyl chain to the C-4 alcohol of the pyran ring. The first step of the pathway is performed by the nrPKS pigA that forms the hexaketide precursor from successive condensations of five malonyl-CoA units, with a simple acetyl-CoA starter unit. The role of esterase pigG is not clear, but it may play at most a supplementary role in the formation of the benzaldehyde produced by the pigA nrPKS. This very reactive benzaldehyde is intercepted by the pigC ketoreductase that to provide the first stable enzyme-free MonAzPs intermediate, 6-(4-hydroxy-2-oxopentyl)-3-methyl-2,4-dioxocyclohexane carbaldehyde, also known as M7PKS-1. The FAD-dependent monooxygenase pigN hydroxylates M7PKS-1 at C-4, which triggers the formation of the pyran ring. PigJ, pigK and pigD are involved in the acetylation of the pyran ring. PigJ and pigK form the two subunits of a dedicated fungal FAS that produces the side chain fatty acyl moiety of MonAzPs and pigD transfers the fatty acyl chain to the C-4 alcohol. PigM and pigO are involved in the elimination of the omega-1 alcohol. PigM acts as an O-acetyltransferase that synthesizes the putative O-11 acetyl intermediate whereas pigO eliminates acetic acid to yield an intermediate with a C10(11) double bond. The dehydration of the C-11 alcohol followed by the reduction of the C6(7) double bond by the NAD(P)H-dependent oxidoreductase pigE increases the electrophilicity of the C-5 ketone of the resulting acyl benzopyran. This in turn sets up the C-5 ketone for an intramolecular Knoevenagel aldol condensation with the C-20 enol of the side chain. This condensation affords the characteristic linear tricyclic carbon skeletons of the yellow pigments that serve as the common precursors for the classical yellow pigments monascin and ankaflavin, orange pigments rubopunctatin and monascorubrin, and red pigments ribropunctamine and monascorubramine. The FAD-dependent oxidoreductase pigF is especially invoved in the biosynthesis of orange and red pigments via desaturation of C6(7). This Monascus ruber (Mold) protein is Fatty acid synthase alpha subunit pigJ.